The primary structure comprises 184 residues: Mitochondrial import inner membrane translocase subunit Tim22 (184 aa).

Disulfide bonds link cysteine 59-cysteine 131 and cysteine 150-cysteine 169. The next 3 membrane-spanning stretches (helical) occupy residues 64–84, 115–133, and 160–180; these read ALACVGGFVLGGAFGVFTAGI, YAKNFAIVGAMFSCTECLV, and AGLKAGVLGCGGFAAFSAVID.

Belongs to the Tim17/Tim22/Tim23 family. As to quaternary structure, core component of the TIM22 complex.

Its subcellular location is the mitochondrion inner membrane. Its function is as follows. Essential core component of the TIM22 complex, a complex that mediates the import and insertion of multi-pass transmembrane proteins into the mitochondrial inner membrane. In the TIM22 complex, it constitutes the voltage-activated and signal-gated channel. Forms a twin-pore translocase that uses the membrane potential as external driving force in 2 voltage-dependent steps. This chain is Mitochondrial import inner membrane translocase subunit Tim22 (timm22), found in Xenopus laevis (African clawed frog).